A 298-amino-acid polypeptide reads, in one-letter code: Small ribosomal subunit protein uS2 (298 aa).

Basic and acidic residues-rich tracts occupy residues 237–259 (QSKE…DGQK) and 280–298 (PKSE…ENKG). Residues 237–298 (QSKELDDKAD…DAAKLPENKG (62 aa)) are disordered.

It belongs to the universal ribosomal protein uS2 family.

This is Small ribosomal subunit protein uS2 from Neorickettsia sennetsu (strain ATCC VR-367 / Miyayama) (Ehrlichia sennetsu).